A 594-amino-acid chain; its full sequence is DEAD-box ATP-dependent RNA helicase 25 (594 aa).

Disordered stretches follow at residues 56-80 and 92-121; these read RSGG…EEGL and GVRE…VDGS. The short motif at 126–154 is the Q motif element; the sequence is TRFDQCTISPLSLKAVKDAGYERMTQVQE. The Helicase ATP-binding domain maps to 157–340; sequence LPVILQGKDV…HIAMKKNYKF (184 aa). 170 to 177 is an ATP binding site; the sequence is AKTGTGKT. The DEAD box motif lies at 288–291; the sequence is DEAD. The 151-residue stretch at 370-520 folds into the Helicase C-terminal domain; it reads ILYDVLKKHV…SVDSSTQTIV (151 aa).

It belongs to the DEAD box helicase family.

It carries out the reaction ATP + H2O = ADP + phosphate + H(+). The polypeptide is DEAD-box ATP-dependent RNA helicase 25 (Oryza sativa subsp. japonica (Rice)).